Here is a 132-residue protein sequence, read N- to C-terminus: Small ribosomal subunit protein uS8 (132 aa).

The protein belongs to the universal ribosomal protein uS8 family. As to quaternary structure, part of the 30S ribosomal subunit. Contacts proteins S5 and S12.

One of the primary rRNA binding proteins, it binds directly to 16S rRNA central domain where it helps coordinate assembly of the platform of the 30S subunit. The polypeptide is Small ribosomal subunit protein uS8 (Psychrobacter cryohalolentis (strain ATCC BAA-1226 / DSM 17306 / VKM B-2378 / K5)).